We begin with the raw amino-acid sequence, 106 residues long: Programmed cell death activator egl-1 (106 aa).

The segment at 73 to 81 is BH3-like; the sequence is LAAMCDDFD.

In terms of assembly, interacts with ced-9; the interaction results in ced-4 release from the ced-4/ced-9 complex. Interaction with ced-9 may enhance interaction of ced-9 with drp-1, but not with ced-4. A ced-9/egl-1 complex may recruit drp-1 to the mitochondrial surface.

It is found in the synapse. In terms of biological role, plays a major role in programmed cell death (PCD or apoptosis) by negatively regulating ced-9. Binds to and directly inhibits the activity of ced-9, releasing the cell death activator ced-4 from a ced-9/ced-4 containing protein complex and allowing ced-4 to activate the cell-killing caspase ced-3. Required to activate programmed cell death in the sister cells of the serotonergic neurosecretory motor (NSM) neurons during embryogenesis. Required to activate programmed cell death in the sister cells of the M4 motor neuron and I1 pharyngeal neuron during embryogenesis. During larval development, required for the elimination of transient presynaptic components upstream of ced-9, ced-4 and ced-3 apoptotic pathway. Together with ain-1, a component of the miRNA-induced-silencing complex (miRISC), and probably upstream of ced-3 and ced-4, regulates temporal cell fate patterning during larval development. Has been shown in two studies to be dispensable in mitochondrial dynamics and morphology during early embryonic development. However, one study shows that during larval development, egl-1 is involved in modulating mitochondrial dynamics, perhaps acting by stabilizing the interaction between ced-9 and drp-1 in order to promote mitochondrial fission. Involved in inducing mitochondrial fragmentation during apoptosis, probably acting via ced-9 and dynamin-related protein drp-1. This is Programmed cell death activator egl-1 from Caenorhabditis elegans.